The primary structure comprises 619 residues: Zinc finger and BTB domain-containing protein 7C (619 aa).

In terms of domain architecture, BTB spans 34-101; that stretch reads CDVLLVVQEQ…AYTSTLTITA (68 aa). A disordered region spans residues 129-218; it reads PGGDGGEEDD…DSFQAGSPGH (90 aa). Over residues 133–173 the composition is skewed to acidic residues; that stretch reads GGEEDDKEDDDDDEDDDDEEDEEEEEEEEEDDDDDTEDFAD. The segment covering 191–208 has biased composition (basic and acidic residues); the sequence is KTDHLTEKAYSDTPRDFP. 3 consecutive C2H2-type zinc fingers follow at residues 364–386, 392–414, and 420–442; these read QQCP…MRTH, YMCT…MRKH, and YLCI…MRIH. The segment at 448–478 adopts a C2H2-type 4; degenerate zinc-finger fold; it reads YQCEFCYKSFTRSDHLHRHIKRQSCRMARPR.

Detected in normal cervical keratinocytes, and in some cervical carcinoma cell lines.

May be a tumor suppressor gene. This is Zinc finger and BTB domain-containing protein 7C (ZBTB7C) from Homo sapiens (Human).